A 248-amino-acid chain; its full sequence is 3-deoxy-manno-octulosonate cytidylyltransferase (248 aa).

Belongs to the KdsB family.

It is found in the cytoplasm. The catalysed reaction is 3-deoxy-alpha-D-manno-oct-2-ulosonate + CTP = CMP-3-deoxy-beta-D-manno-octulosonate + diphosphate. It functions in the pathway nucleotide-sugar biosynthesis; CMP-3-deoxy-D-manno-octulosonate biosynthesis; CMP-3-deoxy-D-manno-octulosonate from 3-deoxy-D-manno-octulosonate and CTP: step 1/1. Its pathway is bacterial outer membrane biogenesis; lipopolysaccharide biosynthesis. Functionally, activates KDO (a required 8-carbon sugar) for incorporation into bacterial lipopolysaccharide in Gram-negative bacteria. In Christiangramia forsetii (strain DSM 17595 / CGMCC 1.15422 / KT0803) (Gramella forsetii), this protein is 3-deoxy-manno-octulosonate cytidylyltransferase.